We begin with the raw amino-acid sequence, 193 residues long: Adenylate kinase (193 aa).

Position 10–15 (10–15 (GAGKGT)) interacts with ATP. Residues 30–59 (STGDMLRAAVKAGTPIGLKAKAVMDAGGLV) are NMP. Residues T31, R36, 57-59 (GLV), 85-88 (GFPR), and Q92 contribute to the AMP site. The interval 126-142 (KRAKETLAAGGTVRADD) is LID. R127 contacts ATP. Positions 139 and 150 each coordinate AMP. A178 is a binding site for ATP.

Belongs to the adenylate kinase family. As to quaternary structure, monomer.

The protein localises to the cytoplasm. The catalysed reaction is AMP + ATP = 2 ADP. The protein operates within purine metabolism; AMP biosynthesis via salvage pathway; AMP from ADP: step 1/1. Catalyzes the reversible transfer of the terminal phosphate group between ATP and AMP. Plays an important role in cellular energy homeostasis and in adenine nucleotide metabolism. The chain is Adenylate kinase from Beijerinckia indica subsp. indica (strain ATCC 9039 / DSM 1715 / NCIMB 8712).